Here is a 703-residue protein sequence, read N- to C-terminus: Polyribonucleotide nucleotidyltransferase (703 aa).

Mg(2+) contacts are provided by Asp-486 and Asp-492. Positions 553–612 constitute a KH domain; sequence PKIEIIHINPDKIRDVIGPGGKKINEIIDATGVKLDIEQDGTVFIGSSDASMIEAAKKLI. The S1 motif domain occupies 622–690; that stretch reads GQIYMATVKR…KQGRVNASRK (69 aa).

Belongs to the polyribonucleotide nucleotidyltransferase family. Mg(2+) is required as a cofactor.

It is found in the cytoplasm. It catalyses the reaction RNA(n+1) + phosphate = RNA(n) + a ribonucleoside 5'-diphosphate. In terms of biological role, involved in mRNA degradation. Catalyzes the phosphorolysis of single-stranded polyribonucleotides processively in the 3'- to 5'-direction. This is Polyribonucleotide nucleotidyltransferase from Macrococcus caseolyticus (strain JCSC5402) (Macrococcoides caseolyticum).